Consider the following 282-residue polypeptide: Undecaprenyl-diphosphatase (282 aa).

8 helical membrane-spanning segments follow: residues 1–21 (MTLIQAILLGIIQGLTEFLPI), 39–59 (PGAAFTAIIQIGTLGAVMLYF), 85–105 (AKMGWMIAAGTLPIVAFGLLF), 115–135 (SLYWISGALIILALVLSLAEW), 153–173 (IGWKEALLIGLAQAIALIPGS), 193–213 (AARFSFLLSLPAVFAAGAFEL), 229–249 (NLAVATITSGIVGYLSIAFLL), and 259–279 (IFIAYRLAAGAGLLLLLGGGT).

This sequence belongs to the UppP family.

The protein resides in the cell inner membrane. It carries out the reaction di-trans,octa-cis-undecaprenyl diphosphate + H2O = di-trans,octa-cis-undecaprenyl phosphate + phosphate + H(+). Catalyzes the dephosphorylation of undecaprenyl diphosphate (UPP). Confers resistance to bacitracin. The chain is Undecaprenyl-diphosphatase from Chlorobium luteolum (strain DSM 273 / BCRC 81028 / 2530) (Pelodictyon luteolum).